A 931-amino-acid chain; its full sequence is MSQSPAFGPRRGSSPRGAAGAAARRNESQDYLLMDSELGEDGCPQAPLPCYGYYPCFRGSDNRLAHRRQTVLREKGRRLANRGPAYMFSDRSTSLSIEEERFLDAAEYGNIPVVRKMLEECHSLNVNCVDYMGQNALQLAVANEHLEITELLLKKENLSRVGDALLLAISKGYVRIVEAILSHPAFAEGKRLATSPSQSELQQDDFYAYDEDGTRFSHDVTPIILAAHCQEYEIVHTLLRKGARIERPHDYFCKCNDCNQKQKHDSFSHSRSRINAYKGLASPAYLSLSSEDPVMTALELSNELAVLANIEKEFKNDYKKLSMQCKDFVVGLLDLCRNTEEVEAILNGDVETLQSGDHGRPNLSRLKLAIKYEVKKFVAHPNCQQQLLSIWYENLSGLRQQTMAVKFLVVLAVAIGLPFLALIYWFAPCSKMGKIMRGPFMKFVAHAASFTIFLGLLVMNAADRFEGTKLLPNETSTDNAKQLFRMKTSCFSWMEMLIISWVIGMIWAECKEIWTQGPKEYLFELWNMLDFGMLAIFAASFIARFMAFWHASKAQSIIDANDTLKDLTKVTLGDNVKYYNLARIKWDPSDPQIISEGLYAIAVVLSFSRIAYILPANESFGPLQISLGRTVKDIFKFMVIFIMVFVAFMIGMFNLYSYYIGAKQNEAFTTVEESFKTLFWAIFGLSEVKSVVINYNHKFIENIGYVLYGVYNVTMVIVLLNMLIAMINSSFQEIEDDADVEWKFARAKLWFSYFEEGRTLPVPFNLVPSPKSLFYLLLKLKKWISELFQGHKKGFQEDAEMNKINEEKKLGILGSHEDLSKLSLDKKQVGHNKQPSIRSSEDFHLNSFNNPPRQYQKIMKRLIKRYVLQAQIDKESDEVNEGELKEIKQDISSLRYELLEEKSQNTEDLAELIRELGEKLSMEPNQEETNR.

Residues 1–23 (MSQSPAFGPRRGSSPRGAAGAAA) are compositionally biased toward low complexity. The segment at 1–26 (MSQSPAFGPRRGSSPRGAAGAAARRN) is disordered. The Cytoplasmic portion of the chain corresponds to 1–438 (MSQSPAFGPR…CSKMGKIMRG (438 aa)). ANK repeat units follow at residues 97 to 126 (IEEERFLDAAEYGNIPVVRKMLEECHSLNV), 132 to 161 (MGQNALQLAVANEHLEITELLLKKENLSRV), 163 to 189 (DALLLAISKGYVRIVEAILSHPAFAEG), and 218 to 247 (HDVTPIILAAHCQEYEIVHTLLRKGARIER). The chain crosses the membrane as a helical span at residues 439–459 (PFMKFVAHAASFTIFLGLLVM). Residues 460–487 (NAADRFEGTKLLPNETSTDNAKQLFRMK) lie on the Extracellular side of the membrane. N-linked (GlcNAc...) asparagine glycosylation is present at N473. Residues 488–508 (TSCFSWMEMLIISWVIGMIWA) traverse the membrane as a helical segment. Residues 509-521 (ECKEIWTQGPKEY) lie on the Cytoplasmic side of the membrane. The chain crosses the membrane as a helical span at residues 522–542 (LFELWNMLDFGMLAIFAASFI). At 543 to 592 (ARFMAFWHASKAQSIIDANDTLKDLTKVTLGDNVKYYNLARIKWDPSDPQ) the chain is on the extracellular side. N561 is a glycosylation site (N-linked (GlcNAc...) asparagine). A helical transmembrane segment spans residues 593-613 (IISEGLYAIAVVLSFSRIAYI). Over 614–636 (LPANESFGPLQISLGRTVKDIFK) the chain is Cytoplasmic. Residues 637 to 657 (FMVIFIMVFVAFMIGMFNLYS) traverse the membrane as a helical segment. Residues 658 to 706 (YYIGAKQNEAFTTVEESFKTLFWAIFGLSEVKSVVINYNHKFIENIGYV) are Extracellular-facing. Residues 707 to 727 (LYGVYNVTMVIVLLNMLIAMI) traverse the membrane as a helical segment. Topologically, residues 728 to 931 (NSSFQEIEDD…MEPNQEETNR (204 aa)) are cytoplasmic. S815 is subject to Phosphoserine.

It belongs to the transient receptor (TC 1.A.4) family. STrpC subfamily. TRPC6 sub-subfamily. Homodimer; forms channel complex. Interacts with MX1 and RNF24. Phosphorylated by FYN, leading to an increase of TRPC6 channel activity. Expressed primarily in placenta, lung, spleen, ovary and small intestine. Expressed in podocytes and is a component of the glomerular slit diaphragm.

The protein localises to the cell membrane. It catalyses the reaction Ca(2+)(in) = Ca(2+)(out). Activated by diacylglycerol (DAG) in a membrane-delimited fashion, independently of protein kinase C. In terms of biological role, forms a receptor-activated non-selective calcium permeant cation channel. Probably is operated by a phosphatidylinositol second messenger system activated by receptor tyrosine kinases or G-protein coupled receptors. Activated by diacylglycerol (DAG) in a membrane-delimited fashion, independently of protein kinase C. Seems not to be activated by intracellular calcium store depletion. This Homo sapiens (Human) protein is Short transient receptor potential channel 6.